A 350-amino-acid chain; its full sequence is Decarboxylase iboD (350 aa).

It belongs to the phosphatidylserine decarboxylase family.

Its pathway is secondary metabolite biosynthesis. Its function is as follows. Decarboxylase; part of the gene cluster that mediates the biosynthesis of the psychoactive metabolites ibotenic acid and muscimol. The first committed step is glutamate hydroxylation by the 2-oxoglutarate-dependent dioxygenase iboH, and the last step is decarboxylation of ibotenic acid to muscimol by the decarboxylase iboD. The order of the intermediate reactions is somewhat ambiguous. IboA likely activates the carboxylic acid at position 5 to introduce an amide bond, and the flavin monooxygenase iboF generates the N-O bond. There are several options for the latter step. One option is that iboF directly hydroxylates the amide nitrogen formed by iboA to produce a hydroxamic acid species. Another option is that iboF hydroxylates an external N-containing compound, whose resulting N-O bond is subsequently introduced into the hydroxyglutamate scaffold. The paralogous PLP-dependent cystathionine gamma-synthase-like enzymes iboG1 and iboG2 are likely involved in substitution of the OH group at position 3 by the O-N moiety. The first cyclic intermediate is most probably tricholomic acid which is likely desaturated to ibotenic acid by the cytochrome P450 monooxygenase iboC. In Amanita muscaria (strain Koide BX008), this protein is Decarboxylase iboD.